A 48-amino-acid polypeptide reads, in one-letter code: Small, acid-soluble spore protein N (48 aa).

The disordered stretch occupies residues 1 to 48 (MMGREHDKQAQFTPDHLGTKPVAYKRNKGKKMHNKSNEQPDVIQTKGE). The span at 23–34 (AYKRNKGKKMHN) shows a compositional bias: basic residues.

Belongs to the SspN family.

It is found in the spore core. The sequence is that of Small, acid-soluble spore protein N from Bacillus pumilus (strain SAFR-032).